The sequence spans 299 residues: tRNA dimethylallyltransferase (299 aa).

Residue 10-17 coordinates ATP; the sequence is GPTAVGKT. Residue 12–17 participates in substrate binding; it reads TAVGKT. The interaction with substrate tRNA stretch occupies residues 35–38; that stretch reads DSQQ.

This sequence belongs to the IPP transferase family. In terms of assembly, monomer. Mg(2+) serves as cofactor.

It carries out the reaction adenosine(37) in tRNA + dimethylallyl diphosphate = N(6)-dimethylallyladenosine(37) in tRNA + diphosphate. Catalyzes the transfer of a dimethylallyl group onto the adenine at position 37 in tRNAs that read codons beginning with uridine, leading to the formation of N6-(dimethylallyl)adenosine (i(6)A). This Streptococcus thermophilus (strain ATCC BAA-491 / LMD-9) protein is tRNA dimethylallyltransferase.